The chain runs to 1396 residues: ATP-dependent helicase/nuclease subunit A (1396 aa).

Positions 1–25 (MNREALCHDDPIGHDRLRPDSIPRD) are disordered. Positions 26-532 (PKWTDEQWQA…IDLAKNFRSR (507 aa)) constitute a UvrD-like helicase ATP-binding domain. Residue 47–54 (AAAGAGKT) participates in ATP binding. Disordered regions lie at residues 590–649 (DADG…GQPT) and 1171–1205 (HSPE…PSPD). A UvrD-like helicase C-terminal domain is found at 615-920 (HKNIAKAGES…RIMSIHKSKG (306 aa)). Over residues 1181–1199 (TPPSLEIPPSLETPPSLET) the composition is skewed to low complexity.

Belongs to the helicase family. AddA subfamily. In terms of assembly, heterodimer of AddA and AddB/RexB. The cofactor is Mg(2+).

The catalysed reaction is Couples ATP hydrolysis with the unwinding of duplex DNA by translocating in the 3'-5' direction.. It catalyses the reaction ATP + H2O = ADP + phosphate + H(+). The heterodimer acts as both an ATP-dependent DNA helicase and an ATP-dependent, dual-direction single-stranded exonuclease. Recognizes the chi site generating a DNA molecule suitable for the initiation of homologous recombination. The AddA nuclease domain is required for chi fragment generation; this subunit has the helicase and 3' -&gt; 5' nuclease activities. The sequence is that of ATP-dependent helicase/nuclease subunit A from Heliobacterium modesticaldum (strain ATCC 51547 / Ice1).